A 485-amino-acid polypeptide reads, in one-letter code: MAMASLYRRSLPSPPAIDFSSAEGKLIFNEALQKGTMEGFFRLISYFQTQSEPAYCGLASLSVVLNALSIDPGRKWKGPWRWFDESMLDCCEPLEVVKEKGISFGKVVCLAHCSGAKVEAFRTSQSTIDDFRKFVVKCTSSENCHMISTYHRGVFKQTGTGHFSPIGGYNAERDMALILDVARFKYPPHWVPLKLLWEAMDSIDQSTGKRRGFMLISRPHREPGLLYTLSCKDESWIEIAKYLKEDVPRLVSSQHVDSVEKIISVVFKSLPSNFNQFIRWVAEIRITEDSNQNLSAEEKSRLKLKQLVLKEVHETELFKHINKFLSTVGYEDSLTYAAAKACCQGAEILSGSPSKEFCCRETCVKCIKGPDDSEGTVVTGVVVRDGNEQKVDLLVPSTQTECECGPEATYPAGNDVFTALLLALPPQTWSGIKDQALMHEMKQLISMASLPTLLQEEVLHLRRQLQLLKRCQENKEEDDLAAPAY.

Positions 1 to 221 (MAMASLYRRS…GFMLISRPHR (221 aa)) constitute a Peptidase C83 domain. Catalysis depends on residues Cys-56, His-162, and Asp-180.

The protein belongs to the phytochelatin synthase family. As to expression, expressed in roots and shoots.

It catalyses the reaction [Glu(-Cys)](n)-Gly + glutathione + H(+) = [Glu(-Cys)](n+1)-Gly + glycine. With respect to regulation, requires cadmium for activity. Also activated in vitro or in heterologous system by Ag(+), Hg(+), Zn(2+), Cu(2+), Fe(2+) or Fe(3+) ions, but not by Co(2+) or Ni(2+) ions. Functionally, involved in the synthesis of phytochelatins (PC) and homophytochelatins (hPC), the heavy-metal-binding peptides of plants. Also involved in glutathione-conjugates degradation. This is Glutathione gamma-glutamylcysteinyltransferase 1 (PCS1) from Arabidopsis thaliana (Mouse-ear cress).